Consider the following 415-residue polypeptide: Protein ROH1A (415 aa).

Residues 184 to 219 (VSGGGGGGGGGNKTTERSWSFGRRSGGSSAASKGGA) are disordered. The span at 185-195 (SGGGGGGGGGN) shows a compositional bias: gly residues. Over residues 200-219 (RSWSFGRRSGGSSAASKGGA) the composition is skewed to low complexity. A helical membrane pass occupies residues 263–283 (MFIMSTVMVFVMWVLTAAVPC).

This sequence belongs to the ROH1 family. In terms of assembly, interacts with EXO70A1 and EXO70C1. Binds to EXO70C2. In terms of tissue distribution, mainly expressed in cells expanding in a polar manner such as pollen and root hairs.

The protein localises to the membrane. The protein resides in the cytoplasm. It is found in the cytosol. Its function is as follows. Required for seed coat mucilage deposition. The polypeptide is Protein ROH1A (Arabidopsis thaliana (Mouse-ear cress)).